Consider the following 334-residue polypeptide: Holliday junction branch migration complex subunit RuvB (334 aa).

The interval 4–184 (ADRLISAEPI…FGIVQRLEFY (181 aa)) is large ATPase domain (RuvB-L). Residues isoleucine 23, arginine 24, glycine 65, lysine 68, threonine 69, threonine 70, 131–133 (EDY), arginine 174, tyrosine 184, and arginine 221 contribute to the ATP site. Threonine 69 lines the Mg(2+) pocket. A small ATPAse domain (RuvB-S) region spans residues 185–255 (QVADLQHIVS…VAMQALDMLN (71 aa)). Positions 258-334 (AEGFDYMDRK…YKHFGMVREE (77 aa)) are head domain (RuvB-H). DNA contacts are provided by arginine 294, arginine 313, and arginine 318.

It belongs to the RuvB family. As to quaternary structure, homohexamer. Forms an RuvA(8)-RuvB(12)-Holliday junction (HJ) complex. HJ DNA is sandwiched between 2 RuvA tetramers; dsDNA enters through RuvA and exits via RuvB. An RuvB hexamer assembles on each DNA strand where it exits the tetramer. Each RuvB hexamer is contacted by two RuvA subunits (via domain III) on 2 adjacent RuvB subunits; this complex drives branch migration. In the full resolvosome a probable DNA-RuvA(4)-RuvB(12)-RuvC(2) complex forms which resolves the HJ.

Its subcellular location is the cytoplasm. The enzyme catalyses ATP + H2O = ADP + phosphate + H(+). Its function is as follows. The RuvA-RuvB-RuvC complex processes Holliday junction (HJ) DNA during genetic recombination and DNA repair, while the RuvA-RuvB complex plays an important role in the rescue of blocked DNA replication forks via replication fork reversal (RFR). RuvA specifically binds to HJ cruciform DNA, conferring on it an open structure. The RuvB hexamer acts as an ATP-dependent pump, pulling dsDNA into and through the RuvAB complex. RuvB forms 2 homohexamers on either side of HJ DNA bound by 1 or 2 RuvA tetramers; 4 subunits per hexamer contact DNA at a time. Coordinated motions by a converter formed by DNA-disengaged RuvB subunits stimulates ATP hydrolysis and nucleotide exchange. Immobilization of the converter enables RuvB to convert the ATP-contained energy into a lever motion, pulling 2 nucleotides of DNA out of the RuvA tetramer per ATP hydrolyzed, thus driving DNA branch migration. The RuvB motors rotate together with the DNA substrate, which together with the progressing nucleotide cycle form the mechanistic basis for DNA recombination by continuous HJ branch migration. Branch migration allows RuvC to scan DNA until it finds its consensus sequence, where it cleaves and resolves cruciform DNA. This chain is Holliday junction branch migration complex subunit RuvB, found in Serratia proteamaculans (strain 568).